Here is a 79-residue protein sequence, read N- to C-terminus: Sulfur carrier protein TusA (79 aa).

Residue Cys-17 is the Cysteine persulfide intermediate of the active site.

This sequence belongs to the sulfur carrier protein TusA family.

Its subcellular location is the cytoplasm. Sulfur carrier protein which probably makes part of a sulfur-relay system. This is Sulfur carrier protein TusA from Pasteurella multocida (strain Pm70).